We begin with the raw amino-acid sequence, 367 residues long: Peptide chain release factor 1 (367 aa).

Q243 bears the N5-methylglutamine mark.

The protein belongs to the prokaryotic/mitochondrial release factor family. Post-translationally, methylated by PrmC. Methylation increases the termination efficiency of RF1.

The protein resides in the cytoplasm. Peptide chain release factor 1 directs the termination of translation in response to the peptide chain termination codons UAG and UAA. This Acidovorax sp. (strain JS42) protein is Peptide chain release factor 1.